The sequence spans 213 residues: Orotate phosphoribosyltransferase (213 aa).

Lys-26 is a binding site for 5-phospho-alpha-D-ribose 1-diphosphate. Orotate is bound at residue 34-35 (FF). Residues 72-73 (YK), Arg-98, Lys-99, Lys-102, His-104, and 123-131 (DDVISAGTS) each bind 5-phospho-alpha-D-ribose 1-diphosphate. Residues Ser-127 and Arg-155 each coordinate orotate.

It belongs to the purine/pyrimidine phosphoribosyltransferase family. PyrE subfamily. Homodimer. The cofactor is Mg(2+).

The catalysed reaction is orotidine 5'-phosphate + diphosphate = orotate + 5-phospho-alpha-D-ribose 1-diphosphate. It functions in the pathway pyrimidine metabolism; UMP biosynthesis via de novo pathway; UMP from orotate: step 1/2. Functionally, catalyzes the transfer of a ribosyl phosphate group from 5-phosphoribose 1-diphosphate to orotate, leading to the formation of orotidine monophosphate (OMP). The polypeptide is Orotate phosphoribosyltransferase (Neisseria meningitidis serogroup A / serotype 4A (strain DSM 15465 / Z2491)).